Here is a 339-residue protein sequence, read N- to C-terminus: Cathepsin B (339 aa).

A signal peptide spans 1 to 17 (MWWLWASLCCLLALGDA). Positions 18-79 (RSRPSFHPLS…QRVMFTEDLK (62 aa)) are cleaved as a propeptide — activation peptide. 6 disulfides stabilise this stretch: Cys-93–Cys-122, Cys-105–Cys-150, Cys-141–Cys-207, Cys-142–Cys-146, Cys-179–Cys-211, and Cys-187–Cys-198. Residue Cys-108 is part of the active site. An N-linked (GlcNAc...) asparagine glycan is attached at Asn-192. At Lys-220 the chain carries N6-acetyllysine. Catalysis depends on residues His-278 and Asn-298. Positions 334–339 (QYWEKI) are excised as a propeptide.

It belongs to the peptidase C1 family. As to quaternary structure, dimer of a heavy chain and a light chain cross-linked by a disulfide bond. Interacts with SRPX2. Directly interacts with SHKBP1.

It localises to the lysosome. It is found in the melanosome. The protein localises to the secreted. Its subcellular location is the extracellular space. The protein resides in the apical cell membrane. It catalyses the reaction Hydrolysis of proteins with broad specificity for peptide bonds. Preferentially cleaves -Arg-Arg-|-Xaa bonds in small molecule substrates (thus differing from cathepsin L). In addition to being an endopeptidase, shows peptidyl-dipeptidase activity, liberating C-terminal dipeptides.. In terms of biological role, thiol protease which is believed to participate in intracellular degradation and turnover of proteins. Cleaves matrix extracellular phosphoglycoprotein MEPE. Involved in the solubilization of cross-linked TG/thyroglobulin in the thyroid follicle lumen. Has also been implicated in tumor invasion and metastasis. The sequence is that of Cathepsin B (CTSB) from Macaca fascicularis (Crab-eating macaque).